A 1847-amino-acid chain; its full sequence is Cilia- and flagella-associated protein 65 (1847 aa).

The chain crosses the membrane as a helical span at residues 112 to 132 (FFTIIPQPIFLSPGITLTLPI). One can recognise an MSP domain in the interval 805–914 (DLKLDTHKSI…VHYRIRLVGM (110 aa)). A coiled-coil region spans residues 1457–1483 (QRELMRQYHKELQEWNEEKARQEVEFT). The tract at residues 1668–1721 (YEGRKSKEQEEDLFGKMPGGQEDDEEEEEDEEEAEEEEEEIEEEMSKDEEDIDK) is disordered. Residues 1688-1720 (QEDDEEEEEDEEEAEEEEEEIEEEMSKDEEDID) show a composition bias toward acidic residues.

Belongs to the CFAP65 family. Interacts with CFAP47. As to expression, predominantly expressed in testis. Highly expressed in round and elongating spermatids. Expressed also in certain ciliated organs, such as the brain, lung and kidney.

The protein localises to the cell projection. It localises to the cilium. It is found in the flagellum membrane. Its subcellular location is the cytoplasmic vesicle. The protein resides in the secretory vesicle. The protein localises to the acrosome membrane. It localises to the cytoplasm. Plays a role in flagellar formation and sperm motility. In Mus musculus (Mouse), this protein is Cilia- and flagella-associated protein 65.